We begin with the raw amino-acid sequence, 134 residues long: RxLR effector protein Avh238 (134 aa).

An N-terminal signal peptide occupies residues 1–21 (MRGVFFVAVAVAIFARSSAEA). The short motif at 44-68 (RFLRVADSEDDDLAAPADDGKTEER) is the RxLR-dEER element. The interval 50–72 (DSEDDDLAAPADDGKTEERAPKF) is disordered. A compositionally biased stretch (basic and acidic residues) spans 61–70 (DDGKTEERAP).

The protein belongs to the RxLR effector family.

Its subcellular location is the secreted. It localises to the host cytoplasm. It is found in the host nucleus. Functionally, effector that, due to the lack of a histidine residue at position 79, is not able to induce cell death in tomato, tobacco, eggplant, potato, or in A.thaliana. The polypeptide is RxLR effector protein Avh238 (Phytophthora sojae (Soybean stem and root rot agent)).